The chain runs to 431 residues: STE20-related kinase adapter protein alpha (431 aa).

Residues Ser2 and Ser46 each carry the phosphoserine modification. One can recognise a Protein kinase domain in the interval 69–379 (YELLTVIGKG…ASTLLNHSFF (311 aa)). Residues 310-347 (LTMSPSRSVANSGLSDSLTTSTPRPSNGDSPSHPYHRT) form a disordered region. A compositionally biased stretch (polar residues) spans 312-339 (MSPSRSVANSGLSDSLTTSTPRPSNGDS). A phosphothreonine; by LKB1 mark is found at Thr329 and Thr401. A Phosphothreonine modification is found at Thr419.

The protein belongs to the protein kinase superfamily. STE Ser/Thr protein kinase family. STE20 subfamily. Component of a trimeric complex composed of STK11/LKB1, STRAD (STRADA or STRADB) and CAB39/MO25 (CAB39/MO25alpha or CAB39L/MO25beta): the complex tethers STK11/LKB1 in the cytoplasm and stimulates its catalytic activity.

Its subcellular location is the nucleus. The protein resides in the cytoplasm. Pseudokinase which, in complex with CAB39/MO25 (CAB39/MO25alpha or CAB39L/MO25beta), binds to and activates STK11/LKB1. Adopts a closed conformation typical of active protein kinases and binds STK11/LKB1 as a pseudosubstrate, promoting conformational change of STK11/LKB1 in an active conformation. The chain is STE20-related kinase adapter protein alpha (STRADA) from Pongo abelii (Sumatran orangutan).